We begin with the raw amino-acid sequence, 241 residues long: Nickel import ATP-binding protein LarO (241 aa).

The 239-residue stretch at 2–240 (IKLVNICYDY…QPARQAQLMT (239 aa)) folds into the ABC transporter domain. 34-41 (GPNGSGKS) serves as a coordination point for ATP.

Belongs to the ABC transporter superfamily. In terms of assembly, may form an energy-coupling factor (ECF) transporter complex composed of an ATP-binding protein (A component, LarO), a transmembrane protein (T component, LarQ) and a fused possible substrate-capture protein (S component, LarMN) of unknown stoichiometry.

The protein localises to the cell membrane. Its function is as follows. Probable ATP-binding component of the energy-coupling factor (ECF) transporter complex LarMNQO involved in nickel import. LarO is presumably responsible for energy coupling to the transport system. The sequence is that of Nickel import ATP-binding protein LarO from Lactiplantibacillus plantarum (strain ATCC BAA-793 / NCIMB 8826 / WCFS1) (Lactobacillus plantarum).